The sequence spans 141 residues: Large ribosomal subunit protein uL11 (141 aa).

It belongs to the universal ribosomal protein uL11 family. In terms of assembly, part of the ribosomal stalk of the 50S ribosomal subunit. Interacts with L10 and the large rRNA to form the base of the stalk. L10 forms an elongated spine to which L12 dimers bind in a sequential fashion forming a multimeric L10(L12)X complex. In terms of processing, one or more lysine residues are methylated.

Forms part of the ribosomal stalk which helps the ribosome interact with GTP-bound translation factors. The chain is Large ribosomal subunit protein uL11 from Nautilia profundicola (strain ATCC BAA-1463 / DSM 18972 / AmH).